Here is a 152-residue protein sequence, read N- to C-terminus: Sec-independent protein translocase protein TatB (152 aa).

The helical transmembrane segment at 1 to 21 threads the bilayer; the sequence is MFDLGWSELLVIGVVALIVVG.

It belongs to the TatB family. In terms of assembly, the Tat system comprises two distinct complexes: a TatABC complex, containing multiple copies of TatA, TatB and TatC subunits, and a separate TatA complex, containing only TatA subunits. Substrates initially bind to the TatABC complex, which probably triggers association of the separate TatA complex to form the active translocon.

The protein localises to the cell inner membrane. Part of the twin-arginine translocation (Tat) system that transports large folded proteins containing a characteristic twin-arginine motif in their signal peptide across membranes. Together with TatC, TatB is part of a receptor directly interacting with Tat signal peptides. TatB may form an oligomeric binding site that transiently accommodates folded Tat precursor proteins before their translocation. The protein is Sec-independent protein translocase protein TatB of Ruegeria pomeroyi (strain ATCC 700808 / DSM 15171 / DSS-3) (Silicibacter pomeroyi).